A 157-amino-acid polypeptide reads, in one-letter code: UPF0179 protein Mhun_1135 (157 aa).

The protein belongs to the UPF0179 family.

The chain is UPF0179 protein Mhun_1135 from Methanospirillum hungatei JF-1 (strain ATCC 27890 / DSM 864 / NBRC 100397 / JF-1).